Here is a 354-residue protein sequence, read N- to C-terminus: Quinone-reactive Ni/Fe-hydrogenase small chain (354 aa).

Positions 1-36 (MLEEKGIERRDFMKWAGAMTAMLSLPATFTPLTAKA) form a signal peptide, tat-type signal. The [4Fe-4S] cluster site is built by C53, C56, C153, C186, H224, C227, C252, and C258. The [3Fe-4S] cluster site is built by C267, C286, and C289.

It belongs to the [NiFe]/[NiFeSe] hydrogenase small subunit family. Heterodimer of a large and a small subunit. Requires [4Fe-4S] cluster as cofactor. The cofactor is [3Fe-4S] cluster. Post-translationally, predicted to be exported by the Tat system. The position of the signal peptide cleavage has been experimentally proven.

The protein resides in the cell membrane. The enzyme catalyses H2 + a menaquinone = a menaquinol. This chain is Quinone-reactive Ni/Fe-hydrogenase small chain (hydA), found in Wolinella succinogenes (strain ATCC 29543 / DSM 1740 / CCUG 13145 / JCM 31913 / LMG 7466 / NCTC 11488 / FDC 602W) (Vibrio succinogenes).